A 272-amino-acid chain; its full sequence is Imidazole glycerol phosphate synthase subunit HisF (272 aa).

Active-site residues include D11 and D130.

The protein belongs to the HisA/HisF family. In terms of assembly, heterodimer of HisH and HisF.

It localises to the cytoplasm. It catalyses the reaction 5-[(5-phospho-1-deoxy-D-ribulos-1-ylimino)methylamino]-1-(5-phospho-beta-D-ribosyl)imidazole-4-carboxamide + L-glutamine = D-erythro-1-(imidazol-4-yl)glycerol 3-phosphate + 5-amino-1-(5-phospho-beta-D-ribosyl)imidazole-4-carboxamide + L-glutamate + H(+). Its pathway is amino-acid biosynthesis; L-histidine biosynthesis; L-histidine from 5-phospho-alpha-D-ribose 1-diphosphate: step 5/9. IGPS catalyzes the conversion of PRFAR and glutamine to IGP, AICAR and glutamate. The HisF subunit catalyzes the cyclization activity that produces IGP and AICAR from PRFAR using the ammonia provided by the HisH subunit. The chain is Imidazole glycerol phosphate synthase subunit HisF from Methanococcus maripaludis (strain DSM 14266 / JCM 13030 / NBRC 101832 / S2 / LL).